A 1018-amino-acid chain; its full sequence is Probable inorganic carbon transporter subunit DabA 2 (1018 aa).

The Zn(2+) site is built by Cys489, Asp491, His674, and Cys689.

It belongs to the inorganic carbon transporter (TC 9.A.2) DabA family. Forms a complex with DabB. It depends on Zn(2+) as a cofactor.

The protein resides in the cell inner membrane. Its function is as follows. Part of an energy-coupled inorganic carbon pump. The sequence is that of Probable inorganic carbon transporter subunit DabA 2 from Sorangium cellulosum (strain So ce56) (Polyangium cellulosum (strain So ce56)).